The chain runs to 89 residues: MAHKKAGGSSRNGRDSAGRRLGVKKYGGQEVIPGNIIVRQRGTKVNPGANVGMGKDHTLFALTEGRVVFAKKSGGKAFVSVEPIAKAAE.

Positions 1 to 24 (MAHKKAGGSSRNGRDSAGRRLGVK) are disordered.

This sequence belongs to the bacterial ribosomal protein bL27 family.

This is Large ribosomal subunit protein bL27 from Maricaulis maris (strain MCS10) (Caulobacter maris).